The sequence spans 342 residues: MASSNFYKNLGPRKLTTIIDFLHDIIEHPKIYEDIVIHDIKILQEASRNDISFLSNTKYSEFLKTTNAAACIVPKNFKGEVNPNTILIHAENSYFAYGKLIDFFYAPIKSYPAKIMKSAIVAASAIIGKNCYIGHNVVIEDDVIIGDNSIIEAGSFIGRGVNLGRNARIEQHVSINYAIIGDDVVILTGAKIGQDGFGFSTEKGVHHQIFHTGIVKIGNNVKIGANTTIDRGSLQDTIIEDLCCIDNLVQIGHGVKIGKGSIIIAQVGIAGSSTIGKYCALGGQVGIAGHLNIGDQVQVAAQSGVAQNIEAGKIVGGSPAVHIMNWHRQSIIMKQLIKKRPK.

Catalysis depends on His253, which acts as the Proton acceptor.

It belongs to the transferase hexapeptide repeat family. LpxD subfamily. As to quaternary structure, homotrimer.

It catalyses the reaction a UDP-3-O-[(3R)-3-hydroxyacyl]-alpha-D-glucosamine + a (3R)-hydroxyacyl-[ACP] = a UDP-2-N,3-O-bis[(3R)-3-hydroxyacyl]-alpha-D-glucosamine + holo-[ACP] + H(+). Its pathway is bacterial outer membrane biogenesis; LPS lipid A biosynthesis. Functionally, catalyzes the N-acylation of UDP-3-O-acylglucosamine using 3-hydroxyacyl-ACP as the acyl donor. Is involved in the biosynthesis of lipid A, a phosphorylated glycolipid that anchors the lipopolysaccharide to the outer membrane of the cell. This is UDP-3-O-acylglucosamine N-acyltransferase from Rickettsia canadensis (strain McKiel).